The primary structure comprises 198 residues: Syndecan-4 (198 aa).

A signal peptide spans Met1–Gly23. At Glu24 to Glu145 the chain is on the extracellular side. 2 disordered regions span residues Tyr42–Phe76 and Ala94–Ser130. 3 O-linked (Xyl...) (glycosaminoglycan) serine glycosylation sites follow: Ser44, Ser62, and Ser64. Residues Pro48–Glu71 show a composition bias toward acidic residues. Residues Ser102–Pro118 show a composition bias toward basic and acidic residues. Residues Val146 to Tyr170 traverse the membrane as a helical segment. The Cytoplasmic segment spans residues Arg171–Ala198.

This sequence belongs to the syndecan proteoglycan family. As to quaternary structure, homodimer. Interacts with CDCP1 and SDCBP. Interacts (via its cytoplasmic domain) with GIPC (via its PDZ domain). Interacts (via its cytoplasmic domain) with NUDT16L1. Interacts with DNM2; this interaction is markedly enhanced at focal ahesion site upon induction of focal adhesions and stress-fiber formation. Post-translationally, shedding is enhanced by a number of factors such as heparanase, thrombin or EGF. Also by stress and wound healing. PMA-mediated shedding is inhibited by TIMP3. O-glycosylated; contains both chondroitin sulfate and heparan sulfate. Ser-44, Ser-62 and Ser-64 can all be modified by either chondroitin sulfate or heparan sulfate, and the protein exists in forms that contain only chondroitin sulfate, only heparan sulfate and both chondroitin sulfate and heparan sulfate. As to expression, ubiquitous. Highest levels in liver, kidney and lung.

Its subcellular location is the membrane. It is found in the secreted. Functionally, cell surface proteoglycan which regulates exosome biogenesis in concert with SDCBP and PDCD6IP. This Mus musculus (Mouse) protein is Syndecan-4.